The primary structure comprises 385 residues: Glutamate 5-kinase (385 aa).

Lys-17 provides a ligand contact to ATP. Substrate is bound by residues Ser-64, Asp-151, and Asn-165. 185–186 (SD) contributes to the ATP binding site. In terms of domain architecture, PUA spans 291–367 (SGTVRVDAGA…DQIENVLGYS (77 aa)).

It belongs to the glutamate 5-kinase family.

It is found in the cytoplasm. It carries out the reaction L-glutamate + ATP = L-glutamyl 5-phosphate + ADP. The protein operates within amino-acid biosynthesis; L-proline biosynthesis; L-glutamate 5-semialdehyde from L-glutamate: step 1/2. In terms of biological role, catalyzes the transfer of a phosphate group to glutamate to form L-glutamate 5-phosphate. This is Glutamate 5-kinase from Methanosarcina mazei (strain ATCC BAA-159 / DSM 3647 / Goe1 / Go1 / JCM 11833 / OCM 88) (Methanosarcina frisia).